The following is a 236-amino-acid chain: Ras-related protein RabY (236 aa).

18-25 (GDRKTGKT) lines the GTP pocket. Residues 40 to 48 (YRQTNLLHF) carry the Effector region motif. GTP is bound by residues 66 to 70 (DSQAD) and 126 to 129 (NKSD). Low complexity predominate over residues 192 to 225 (QQQQQQQQQQQQQQQQQQQQQQQQQQQQQQQHQQ). The tract at residues 192-236 (QQQQQQQQQQQQQQQQQQQQQQQQQQQQQQQHQQSSKTKIGCLIQ) is disordered. Cys-233 is modified (cysteine methyl ester). Cys-233 carries the S-geranylgeranyl cysteine lipid modification. The propeptide at 234-236 (LIQ) is removed in mature form.

It belongs to the small GTPase superfamily. Rab family.

Its subcellular location is the cell membrane. This chain is Ras-related protein RabY (rabY), found in Dictyostelium discoideum (Social amoeba).